The following is a 236-amino-acid chain: TVP38/TMEM64 family membrane protein YdjX (236 aa).

Helical transmembrane passes span 7 to 27, 50 to 70, 72 to 92, 156 to 176, and 192 to 212; these read FLFACLIFALVIYAIHAFGLF, LYILLFIIATLLLLPGSILVI, GGIVFGPLLGTLLSLIAATLA, IAFWPYTLISALTTLPGIVIY, and FILQLCLAGLALFILVQLAKL. The VTT domain stretch occupies residues 73-183; that stretch reads GIVFGPLLGT…VIYTVMASDL (111 aa).

Belongs to the TVP38/TMEM64 family.

The protein resides in the cell membrane. In Escherichia coli (strain K12), this protein is TVP38/TMEM64 family membrane protein YdjX (ydjX).